The primary structure comprises 308 residues: Cyclin-D4-1 (308 aa).

The protein belongs to the cyclin family. Cyclin D subfamily. As to quaternary structure, interacts with CDKA-1, CDKB2-1, KRP4/ICK7, KRP5/ICK3, KRP6/ICK4 and KRP7/ICK5. As to expression, expressed in shoot apical meristem, leaf primordia vascular tissues and tapetum of anthers.

In terms of biological role, may activate cell cycle in the root apical meristem (RAM) and promote embryonic root (radicle) protrusion. This Arabidopsis thaliana (Mouse-ear cress) protein is Cyclin-D4-1 (CYCD4-1).